A 156-amino-acid chain; its full sequence is rRNA methyltransferase (156 aa).

Functionally, modifies 16S rRNA so making ribosomes resistant to certain aminoglycosides. In Saccharopolyspora hirsuta, this protein is rRNA methyltransferase (kamC).